We begin with the raw amino-acid sequence, 791 residues long: Protein Rf1, mitochondrial (791 aa).

A mitochondrion-targeting transit peptide spans 1 to 27; that stretch reads MARRAASRAVGALRSDGSIQGRGGRAG. The interval 1 to 31 is disordered; the sequence is MARRAASRAVGALRSDGSIQGRGGRAGGSGA. The segment covering 20–30 has biased composition (gly residues); that stretch reads QGRGGRAGGSG. PPR repeat units lie at residues 86-120, 121-156, 157-194, 195-229, 230-264, 265-299, 300-334, 335-369, 370-404, 405-439, 440-474, 475-509, 510-544, 545-579, 580-614, 615-649, 650-684, 685-719, and 720-754; these read DLCTYGILIGCCCRAGRLDLGFAALGNVIKKGFRV, DAIAFTPLLKGLCADKRTSDAMDIVLRRMTELGCIP, NVFSYNILLKGLCDENRSQEALELLHMMADDRGGGSPP, DVVSYTTVINGFFKEGDSDKAYSTYHEMLDRGILP, DVVTYNSIIAALCKAQAMDKAMEVLNTMVKNGVMP, DCMTYNSILHGYCSSGQPKEAIGFLKKMRSDGVEP, DVVTYSLLMDYLCKNGRCMEARKIFDSMTKRGLKP, EITTYGTLLQGYATKGALVEMHGLLDLMVRNGIHP, DHYVFSILICAYAKQGKVDQAMLVFSKMRQQGLNP, NAVTYGAVIGILCKSGRVEDAMLYFEQMIDEGLSP, GNIVYNSLIHGLCTCNKWERAEELILEMLDRGICL, NTIFFNSIIDSHCKEGRVIESEKLFELMVRIGVKP, NVITYNTLINGYCLAGKMDEAMKLLSGMVSVGLKP, NTVTYSTLINGYCKISRMEDALVLFKEMESSGVSP, DIITYNIILQGLFQTRRTAAAKELYVRITESGTQI, ELSTYNIILHGLCKNKLTDDALQMFQNLCLMDLKL, EARTFNIMIDALLKVGRNDEAKDLFVAFSSNGLVP, NYWTYRLMAENIIGQGLLEELDQLFLSMEDNGCTV, and DSGMLNFIVRELLQRGEITRAGTYLSMIDEKHFSL.

It localises to the mitochondrion. Functionally, reduces the expression of the cytoplasmic male sterility (CMS)-associated mitochondrial gene ORF79, encoding a cytotoxic peptide. Can restore male fertility by blocking ORF79 production via endonucleolytic cleavage of dicistronic ATP6/ORF79 mRNA. Promotes the editing of ATP6 mRNAs independently of its cleavage function. This chain is Protein Rf1, mitochondrial (Rf1), found in Oryza sativa subsp. indica (Rice).